We begin with the raw amino-acid sequence, 193 residues long: Large ribosomal subunit protein bL25 (193 aa).

The protein belongs to the bacterial ribosomal protein bL25 family. CTC subfamily. In terms of assembly, part of the 50S ribosomal subunit; part of the 5S rRNA/L5/L18/L25 subcomplex. Contacts the 5S rRNA. Binds to the 5S rRNA independently of L5 and L18.

This is one of the proteins that binds to the 5S RNA in the ribosome where it forms part of the central protuberance. This is Large ribosomal subunit protein bL25 from Clostridium tetani (strain Massachusetts / E88).